The following is a 58-amino-acid chain: UPF0391 membrane protein Sden_3712 (58 aa).

The next 2 membrane-spanning stretches (helical) occupy residues Leu-6–Ala-26 and Ala-27–Val-47.

Belongs to the UPF0391 family.

Its subcellular location is the cell membrane. In Shewanella denitrificans (strain OS217 / ATCC BAA-1090 / DSM 15013), this protein is UPF0391 membrane protein Sden_3712.